Consider the following 277-residue polypeptide: Indole-3-glycerol phosphate synthase (277 aa).

It belongs to the TrpC family.

It carries out the reaction 1-(2-carboxyphenylamino)-1-deoxy-D-ribulose 5-phosphate + H(+) = (1S,2R)-1-C-(indol-3-yl)glycerol 3-phosphate + CO2 + H2O. It participates in amino-acid biosynthesis; L-tryptophan biosynthesis; L-tryptophan from chorismate: step 4/5. The chain is Indole-3-glycerol phosphate synthase from Pseudomonas putida (strain ATCC 47054 / DSM 6125 / CFBP 8728 / NCIMB 11950 / KT2440).